The sequence spans 90 residues: Small ribosomal subunit protein bS16 (90 aa).

It belongs to the bacterial ribosomal protein bS16 family.

In Bacillus licheniformis (strain ATCC 14580 / DSM 13 / JCM 2505 / CCUG 7422 / NBRC 12200 / NCIMB 9375 / NCTC 10341 / NRRL NRS-1264 / Gibson 46), this protein is Small ribosomal subunit protein bS16.